Consider the following 630-residue polypeptide: A disintegrin and metalloproteinase with thrombospondin motifs 4 (630 aa).

A propeptide spanning residues 1–5 (RRTKR) is cleaved from the precursor. In terms of domain architecture, Peptidase M12B spans 11–221 (RFVETLVVAD…GYGHCLLDKP (211 aa)). Cystine bridges form between C86-C138, C115-C120, C132-C216, C170-C200, C242-C265, C253-C275, C260-C294, C288-C299, C325-C362, C329-C367, and C340-C352. N96 carries N-linked (GlcNAc...) asparagine glycosylation. Position 154 (H154) interacts with Zn(2+). E155 is a catalytic residue. The Zn(2+) site is built by H158 and H164. In terms of domain architecture, Disintegrin spans 233 to 303 (GKDYDADRQC…CMGGRCLHVD (71 aa)). Residues 313–368 (AGGWGPWGPWGDCSRTCGGGVQFSSRDCTKPVPRNGGKYCEGRRTPFRSCNTKNCP) enclose the TSP type-1 domain. N474 carries N-linked (GlcNAc...) asparagine glycosylation. A spacer region spans residues 479–630 (SKQSGSFKKF…LRKRTWAGRK (152 aa)).

Interacts with SRPX2. It depends on Zn(2+) as a cofactor. In terms of processing, the precursor is cleaved by a furin endopeptidase. Post-translationally, glycosylated. Can be O-fucosylated by POFUT2 on a serine or a threonine residue found within the consensus sequence C1-X(2)-(S/T)-C2-G of the TSP type-1 repeat domains where C1 and C2 are the first and second cysteine residue of the repeat, respectively. Fucosylated repeats can then be further glycosylated by the addition of a beta-1,3-glucose residue by the glucosyltransferase, B3GALTL. Fucosylation mediates the efficient secretion of ADAMTS family members. Can also be C-glycosylated with one or two mannose molecules on tryptophan residues within the consensus sequence W-X-X-W of the TPRs, and N-glycosylated. These other glycosylations can also facilitate secretion. Brain specific.

The protein resides in the secreted. It localises to the extracellular space. It is found in the extracellular matrix. It catalyses the reaction Glutamyl endopeptidase. Bonds cleaved include 370-Thr-Glu-Gly-Glu-|-Ala-Arg-Gly-Ser-377 in the interglobular domain of mammalian aggrecan.. In terms of biological role, cleaves aggrecan, a cartilage proteoglycan, at the '392-Glu-|-Ala-393' site and may be involved in its turnover. Also cleaves COMP. May play an important role in the destruction of aggrecan in arthritic diseases. The polypeptide is A disintegrin and metalloproteinase with thrombospondin motifs 4 (Adamts4) (Rattus norvegicus (Rat)).